The primary structure comprises 427 residues: Serine--tRNA ligase (427 aa).

Thr231–Glu233 contributes to the L-serine binding site. Arg262–Glu264 contributes to the ATP binding site. Residue Glu285 coordinates L-serine. Glu349–Ser352 contributes to the ATP binding site. Ser385 serves as a coordination point for L-serine.

It belongs to the class-II aminoacyl-tRNA synthetase family. Type-1 seryl-tRNA synthetase subfamily. Homodimer. The tRNA molecule binds across the dimer.

It is found in the cytoplasm. It carries out the reaction tRNA(Ser) + L-serine + ATP = L-seryl-tRNA(Ser) + AMP + diphosphate + H(+). It catalyses the reaction tRNA(Sec) + L-serine + ATP = L-seryl-tRNA(Sec) + AMP + diphosphate + H(+). It functions in the pathway aminoacyl-tRNA biosynthesis; selenocysteinyl-tRNA(Sec) biosynthesis; L-seryl-tRNA(Sec) from L-serine and tRNA(Sec): step 1/1. In terms of biological role, catalyzes the attachment of serine to tRNA(Ser). Is also able to aminoacylate tRNA(Sec) with serine, to form the misacylated tRNA L-seryl-tRNA(Sec), which will be further converted into selenocysteinyl-tRNA(Sec). This is Serine--tRNA ligase from Rhizobium etli (strain CIAT 652).